A 147-amino-acid chain; its full sequence is Cyanate hydratase (147 aa).

Catalysis depends on residues Arg-88, Glu-91, and Ser-114.

It belongs to the cyanase family.

The catalysed reaction is cyanate + hydrogencarbonate + 3 H(+) = NH4(+) + 2 CO2. In terms of biological role, catalyzes the reaction of cyanate with bicarbonate to produce ammonia and carbon dioxide. This is Cyanate hydratase from Prochlorococcus marinus subsp. pastoris (strain CCMP1986 / NIES-2087 / MED4).